The sequence spans 310 residues: HTH-type transcriptional activator TtdR (310 aa).

The region spanning 6-63 (PLAKDLQVLVEIVHSGSFSAAAATLGQTPAFVTKRIQILENTLATTLLNRSARGVALT) is the HTH lysR-type domain. Positions 23–42 (FSAAAATLGQTPAFVTKRIQ) form a DNA-binding region, H-T-H motif.

It belongs to the LysR transcriptional regulatory family.

Its function is as follows. Positive regulator required for L-tartrate-dependent anaerobic growth on glycerol. Induces expression of the ttdA-ttdB-ygjE operon. The sequence is that of HTH-type transcriptional activator TtdR (ttdR) from Escherichia coli O6:H1 (strain CFT073 / ATCC 700928 / UPEC).